Reading from the N-terminus, the 352-residue chain is Ion-translocating oxidoreductase complex subunit D (352 aa).

4 consecutive transmembrane segments (helical) span residues 20–40, 42–62, 69–91, and 123–143; these read IMLL…WFFG, GTLF…AIVL, VASH…SIPP, and PAMI…TSWL. FMN phosphoryl threonine is present on Thr187. 5 helical membrane-spanning segments follow: residues 215 to 235, 242 to 262, 267 to 287, 301 to 321, and 322 to 342; these read LAGV…VFLL, WHIP…GWLF, LASP…FFIL, LIFG…GGYP, and DGVA…DYYT.

Belongs to the NqrB/RnfD family. In terms of assembly, the complex is composed of six subunits: RsxA, RsxB, RsxC, RsxD, RsxE and RsxG. FMN serves as cofactor.

It localises to the cell inner membrane. Part of a membrane-bound complex that couples electron transfer with translocation of ions across the membrane. Required to maintain the reduced state of SoxR. This Salmonella agona (strain SL483) protein is Ion-translocating oxidoreductase complex subunit D.